A 464-amino-acid polypeptide reads, in one-letter code: Cysteine--tRNA ligase (464 aa).

C28 contacts Zn(2+). The short motif at 30 to 40 (ITAYDFCHIGH) is the 'HIGH' region element. Residues C210, H235, and E239 each contribute to the Zn(2+) site. Positions 267–271 (KMSKS) match the 'KMSKS' region motif. Residue K270 coordinates ATP.

This sequence belongs to the class-I aminoacyl-tRNA synthetase family. As to quaternary structure, monomer. The cofactor is Zn(2+).

The protein localises to the cytoplasm. The catalysed reaction is tRNA(Cys) + L-cysteine + ATP = L-cysteinyl-tRNA(Cys) + AMP + diphosphate. This is Cysteine--tRNA ligase from Buchnera aphidicola subsp. Baizongia pistaciae (strain Bp).